The sequence spans 609 residues: MDYDKLSKDILQLVGGEENVQRVIHCMTRLRFNLHDNAKADRSQLEQLPGVMGTNISGEQFQIIIGNDVPKVYQAIVRHSNLSDEKSAGSSSQKKNVLSAVFDVISGVFTPILPAIAGAGMIKGLVALAVTFGWMAEKSQVHVILTAVGDGAFYFLPLLLAMSAARKFGSNPYVAAAIAAAILHPDLTALLGAGKPISFIGLPVTAATYSSTVIPILLSIWIASYVEKWIDRFTHASLKLIVVPTFTLLIVVPLTLITVGPLGAILGEYLSSGVNYLFDHAGLVAMILLAGTFSLIIMTGMHYAFVPIMINNIAQNGHDYLLPAMFLANMGQAGASFAVFLRSRNKKFKSLALTTSITALMGITEPAMYGVNMRLKKPFAAALIGGAAGGAFYGMTGVASYIVGGNAGLPSIPVFIGPTFIYAMIGLVIAFAAGTAAAYLLGFEDVPSDGSQQPAVHEGSREIIHSPIKGEVKALSEVKDGVFSAGVMGKGFAIEPEEGEVVSPVRGSVTTIFKTKHAIGITSDQGAEILIHIGLDTVKLEGQWFTAHIKEGDKVAPGDPLVSFDLEQIKAAGYDVITPVIVTNTDQYSFSPVKEIGKVQPKEALLALS.

The PTS EIIB type-1 domain maps to 1 to 86; sequence MDYDKLSKDI…VRHSNLSDEK (86 aa). The active-site Phosphocysteine intermediate; for EIIB activity is the Cys-26. The 357-residue stretch at 103–459 folds into the PTS EIIC type-1 domain; that stretch reads DVISGVFTPI…GSQQPAVHEG (357 aa). 10 helical membrane-spanning segments follow: residues 112–132, 141–161, 174–194, 202–222, 246–266, 281–301, 321–341, 351–371, 379–399, and 412–432; these read ILPA…AVTF, VHVI…LLLA, VAAA…LGAG, LPVT…SIWI, FTLL…GAIL, AGLV…MTGM, LLPA…AVFL, LALT…MYGV, FAAA…TGVA, and IPVF…IAFA. The PTS EIIA type-1 domain occupies 480–584; that stretch reads DGVFSAGVMG…DVITPVIVTN (105 aa). His-532 (tele-phosphohistidine intermediate; for EIIA activity) is an active-site residue.

The protein resides in the cell membrane. Functionally, the phosphoenolpyruvate-dependent sugar phosphotransferase system (sugar PTS), a major carbohydrate active -transport system, catalyzes the phosphorylation of incoming sugar substrates concomitantly with their translocation across the cell membrane. This system is involved in beta-glucoside transport. This chain is PTS system beta-glucoside-specific EIIBCA component (bglP), found in Bacillus subtilis (strain 168).